The following is a 182-amino-acid chain: Adenylate kinase (182 aa).

12 to 17 (GAGKGT) contributes to the ATP binding site. Residues 32-61 (STGELLRKEIEMNTNLGIQVKDIMNRGELV) form an NMP region. AMP-binding positions include Thr33, Arg38, 59 to 61 (ELV), 85 to 88 (GYPR), and Gln92. The tract at residues 126 to 132 (LRGRKDD) is LID. Arg127 contacts ATP. AMP-binding residues include Arg129 and Arg140. Residue Arg168 coordinates ATP.

This sequence belongs to the adenylate kinase family. As to quaternary structure, monomer.

The protein localises to the cytoplasm. It carries out the reaction AMP + ATP = 2 ADP. Its pathway is purine metabolism; AMP biosynthesis via salvage pathway; AMP from ADP: step 1/1. Catalyzes the reversible transfer of the terminal phosphate group between ATP and AMP. Plays an important role in cellular energy homeostasis and in adenine nucleotide metabolism. The protein is Adenylate kinase of Prochlorococcus marinus (strain AS9601).